A 517-amino-acid polypeptide reads, in one-letter code: Glutamate--tRNA ligase (517 aa).

Residues 10–20 carry the 'HIGH' region motif; it reads PSPSGFLHVGG. C107, C109, C134, and D136 together coordinate Zn(2+). Positions 250 to 254 match the 'KMSKS' region motif; it reads KLSKR. ATP is bound at residue K253.

The protein belongs to the class-I aminoacyl-tRNA synthetase family. Glutamate--tRNA ligase type 1 subfamily. In terms of assembly, monomer. Zn(2+) is required as a cofactor.

The protein localises to the cytoplasm. The enzyme catalyses tRNA(Glu) + L-glutamate + ATP = L-glutamyl-tRNA(Glu) + AMP + diphosphate. Functionally, catalyzes the attachment of glutamate to tRNA(Glu) in a two-step reaction: glutamate is first activated by ATP to form Glu-AMP and then transferred to the acceptor end of tRNA(Glu). The protein is Glutamate--tRNA ligase of Leptospira biflexa serovar Patoc (strain Patoc 1 / ATCC 23582 / Paris).